The primary structure comprises 192 residues: Probable nicotinate-nucleotide adenylyltransferase (192 aa).

Belongs to the NadD family.

It carries out the reaction nicotinate beta-D-ribonucleotide + ATP + H(+) = deamido-NAD(+) + diphosphate. It participates in cofactor biosynthesis; NAD(+) biosynthesis; deamido-NAD(+) from nicotinate D-ribonucleotide: step 1/1. In terms of biological role, catalyzes the reversible adenylation of nicotinate mononucleotide (NaMN) to nicotinic acid adenine dinucleotide (NaAD). This chain is Probable nicotinate-nucleotide adenylyltransferase, found in Bradyrhizobium sp. (strain ORS 278).